A 514-amino-acid polypeptide reads, in one-letter code: 6-phosphofructo-2-kinase/fructose-2,6-bisphosphatase 3 (514 aa).

The segment at 1–245 (MPLELTQSRV…VYYLMNIHVQ (245 aa)) is 6-phosphofructo-2-kinase. 42–50 (GLPARGKTY) serves as a coordination point for ATP. 2 residues coordinate beta-D-fructose 6-phosphate: R75 and R99. The active site involves D125. T127 and R133 together coordinate beta-D-fructose 6-phosphate. C155 is a catalytic residue. ATP is bound at residue 164–169 (NIMEVK). Residues K169, R190, and Y194 each contribute to the beta-D-fructose 6-phosphate site. The tract at residues 246-514 (PRTIYLCRHG…QPLLGQACLT (269 aa)) is fructose-2,6-bisphosphatase. R253 lines the beta-D-fructose 2,6-bisphosphate pocket. The active-site Tele-phosphohistidine intermediate is H254. Beta-D-fructose 2,6-bisphosphate-binding residues include N260 and G266. E323 functions as the Proton donor/acceptor in the catalytic mechanism. Beta-D-fructose 2,6-bisphosphate-binding residues include Y334, R348, K352, Y363, Q389, and R393. Residue 345–348 (YALR) participates in ATP binding. ATP-binding positions include 389-393 (QAVLR) and Y425. The interval 444-475 (ERSEDAKKGPNPLMRRNSVTPLASPEPTKKPR) is disordered. A Phosphoserine; by AMPK and PKA modification is found at S461. T463 is subject to Phosphothreonine. The residue at position 467 (S467) is a Phosphoserine. T471 bears the Phosphothreonine; by PKC mark.

It in the C-terminal section; belongs to the phosphoglycerate mutase family. Homodimer. Forms a heterodimer with PFKFB2. In terms of processing, phosphorylation by AMPK stimulates activity.

It carries out the reaction beta-D-fructose 2,6-bisphosphate + H2O = beta-D-fructose 6-phosphate + phosphate. The enzyme catalyses beta-D-fructose 6-phosphate + ATP = beta-D-fructose 2,6-bisphosphate + ADP + H(+). Catalyzes both the synthesis and degradation of fructose 2,6-bisphosphate. The sequence is that of 6-phosphofructo-2-kinase/fructose-2,6-bisphosphatase 3 (PFKFB3) from Pongo abelii (Sumatran orangutan).